The following is a 63-amino-acid chain: MNNKVNNIKITQIKSAIGCKYDQRLTLIGLGLNKINKSVILENTNSIKGMVKKVKHLLEIKNM.

This sequence belongs to the universal ribosomal protein uL30 family. In terms of assembly, part of the 50S ribosomal subunit.

This chain is Large ribosomal subunit protein uL30, found in Rickettsia typhi (strain ATCC VR-144 / Wilmington).